The following is a 203-amino-acid chain: Glycerol-3-phosphate acyltransferase (203 aa).

Helical transmembrane passes span 13–33 (TLACLVFGYLLGSIPFGLILT), 66–86 (TLLLDALKGTAAAAIASLWGV), 88–108 (AGMAAGLAAFLGHLFPVWLSF), 118–138 (IGVLLGLVPVMVLLFAAAWLA), and 156–176 (IIPVALYATGNGKVALLFAVM).

Belongs to the PlsY family. Probably interacts with PlsX.

It localises to the cell inner membrane. It catalyses the reaction an acyl phosphate + sn-glycerol 3-phosphate = a 1-acyl-sn-glycero-3-phosphate + phosphate. It participates in lipid metabolism; phospholipid metabolism. Catalyzes the transfer of an acyl group from acyl-phosphate (acyl-PO(4)) to glycerol-3-phosphate (G3P) to form lysophosphatidic acid (LPA). This enzyme utilizes acyl-phosphate as fatty acyl donor, but not acyl-CoA or acyl-ACP. The protein is Glycerol-3-phosphate acyltransferase of Sinorhizobium medicae (strain WSM419) (Ensifer medicae).